The chain runs to 84 residues: Small ribosomal subunit protein uS17 (84 aa).

The protein belongs to the universal ribosomal protein uS17 family. As to quaternary structure, part of the 30S ribosomal subunit.

Its function is as follows. One of the primary rRNA binding proteins, it binds specifically to the 5'-end of 16S ribosomal RNA. The chain is Small ribosomal subunit protein uS17 from Clostridium botulinum (strain Okra / Type B1).